Here is a 343-residue protein sequence, read N- to C-terminus: Glyceraldehyde-3-phosphate dehydrogenase (343 aa).

NAD(+)-binding positions include 11-12 and Gly110; that span reads TI. Residue 139-141 coordinates D-glyceraldehyde 3-phosphate; it reads SCN. Residue Cys140 is the Nucleophile of the active site. Arg168 lines the NAD(+) pocket. 194–195 is a binding site for D-glyceraldehyde 3-phosphate; that stretch reads HG. Gln301 is an NAD(+) binding site.

The protein belongs to the glyceraldehyde-3-phosphate dehydrogenase family. Homotetramer.

It localises to the cytoplasm. It carries out the reaction D-glyceraldehyde 3-phosphate + phosphate + NADP(+) = (2R)-3-phospho-glyceroyl phosphate + NADPH + H(+). The enzyme catalyses D-glyceraldehyde 3-phosphate + phosphate + NAD(+) = (2R)-3-phospho-glyceroyl phosphate + NADH + H(+). It functions in the pathway carbohydrate degradation; glycolysis; pyruvate from D-glyceraldehyde 3-phosphate: step 1/5. This Methanoregula boonei (strain DSM 21154 / JCM 14090 / 6A8) protein is Glyceraldehyde-3-phosphate dehydrogenase.